The chain runs to 402 residues: Succinyl-CoA--D-citramalate CoA-transferase (402 aa).

Aspartate 174 functions as the Nucleophile in the catalytic mechanism.

It belongs to the CoA-transferase III family. Homodimer.

It carries out the reaction (3R)-citramalate + succinyl-CoA = (3R)-citramalyl-CoA + succinate. The catalysed reaction is (R)-malate + succinyl-CoA = (R)-malyl-CoA + succinate. In terms of biological role, involved in the 3-hydroxypropionate cycle used for autotrophic carbon dioxide fixation, and in the glyoxylate assimilation cycle used to regenerate acetyl-CoA and produce pyruvate as universal precursor for biosynthesis. Catalyzes the transfer of CoA moiety from succinyl-CoA to D-citramalate to yield citramalyl-CoA. The chain is Succinyl-CoA--D-citramalate CoA-transferase from Chloroflexus aurantiacus (strain ATCC 29366 / DSM 635 / J-10-fl).